The sequence spans 494 residues: NADPH:adrenodoxin oxidoreductase, mitochondrial (494 aa).

The N-terminal 34 residues, 1-34 (MAPRCWHWWRWSAWSGLRPSPSRSTPTPGFCQKF), are a transit peptide targeting the mitochondrion. FAD-binding residues include A51, E72, L80, and V116. NADP(+)-binding positions include 187 to 190 (QGNV), 231 to 232 (RR), and E243. S313 carries the post-translational modification Phosphoserine. FAD contacts are provided by residues W401 and 408–410 (GVI). G408 is an NADP(+) binding site.

This sequence belongs to the ferredoxin--NADP reductase type 1 family. As to quaternary structure, monomer. Interacts directly with FDX1. FAD is required as a cofactor. As to expression, expressed in the adrenal, testis and ovary and to a lesser extent in the liver and kidney.

The protein localises to the mitochondrion inner membrane. The catalysed reaction is 2 reduced [adrenodoxin] + NADP(+) + H(+) = 2 oxidized [adrenodoxin] + NADPH. The enzyme catalyses 2 reduced [2Fe-2S]-[ferredoxin] + NADP(+) + H(+) = 2 oxidized [2Fe-2S]-[ferredoxin] + NADPH. It functions in the pathway steroid metabolism; cholesterol metabolism. Functionally, serves as the first electron transfer protein in all the mitochondrial P450 systems including cholesterol side chain cleavage in all steroidogenic tissues, steroid 11-beta hydroxylation in the adrenal cortex, 25-OH-vitamin D3-24 hydroxylation in the kidney, and sterol C-27 hydroxylation in the liver. Also acts as a ferredoxin--NADP(+) reductase essential for coenzyme Q biosynthesis: together with FDX2, transfers the electrons required for the hydroxylation reaction performed by COQ6. In Mus musculus (Mouse), this protein is NADPH:adrenodoxin oxidoreductase, mitochondrial (Fdxr).